The chain runs to 427 residues: Ectoine TRAP transporter large permease protein TeaC (427 aa).

12 consecutive transmembrane segments (helical) span residues 13-35, 49-69, 79-99, 103-123, 147-167, 172-192, 216-236, 237-257, 273-293, 320-340, 356-376, and 400-420; these read LLLG…FMMF, MAGI…AADI, LINM…VSTA, TLFG…GSPL, IAFL…SGTS, FIAG…YCVI, LALW…GGIF, SPTE…FVVF, GLIT…SWII, ICVA…ILVL, VLVG…PPFG, and FIFM…IALF.

The protein belongs to the TRAP transporter large permease family. As to quaternary structure, the complex comprises the extracytoplasmic solute receptor protein TeaA, and the two transmembrane proteins TeaB and TeaC.

Its subcellular location is the cell inner membrane. In terms of biological role, part of the tripartite ATP-independent periplasmic (TRAP) transport system TeaABC involved in the uptake of ectoine and hydroxyectoine in response to osmotic upshock. Probably functions as a recovery system for synthesized ectoine that leaks out of the cell. The chain is Ectoine TRAP transporter large permease protein TeaC (teaC) from Halomonas elongata (strain ATCC 33173 / DSM 2581 / NBRC 15536 / NCIMB 2198 / 1H9).